A 658-amino-acid chain; its full sequence is Biosynthetic arginine decarboxylase (658 aa).

Lys127 is modified (N6-(pyridoxal phosphate)lysine). Residue 307–317 (FDVGGGLGVDY) participates in substrate binding.

This sequence belongs to the Orn/Lys/Arg decarboxylase class-II family. SpeA subfamily. The cofactor is Mg(2+). Requires pyridoxal 5'-phosphate as cofactor.

The catalysed reaction is L-arginine + H(+) = agmatine + CO2. It functions in the pathway amine and polyamine biosynthesis; agmatine biosynthesis; agmatine from L-arginine: step 1/1. Its function is as follows. Catalyzes the biosynthesis of agmatine from arginine. The chain is Biosynthetic arginine decarboxylase from Salmonella typhi.